Consider the following 229-residue polypeptide: Small ribosomal subunit protein uS3 (229 aa).

One can recognise a KH type-2 domain in the interval 39 to 107 (VRQYLTEKLK…TAQINIAEIR (69 aa)).

This sequence belongs to the universal ribosomal protein uS3 family. In terms of assembly, part of the 30S ribosomal subunit. Forms a tight complex with proteins S10 and S14.

Functionally, binds the lower part of the 30S subunit head. Binds mRNA in the 70S ribosome, positioning it for translation. The polypeptide is Small ribosomal subunit protein uS3 (Shewanella denitrificans (strain OS217 / ATCC BAA-1090 / DSM 15013)).